The chain runs to 322 residues: D-alanine--D-alanine ligase (322 aa).

One can recognise an ATP-grasp domain in the interval 108 to 311; sequence KEFYYNAELP…FPSLLDTLIE (204 aa). Residue 136–192 coordinates ATP; it reads IEDLGLPLVVKPACAGSSIGISLAHTEEELLAGINHARDCSAGAIMVEQFIKGRELT. Mg(2+) contacts are provided by aspartate 265, glutamate 278, and asparagine 280.

Belongs to the D-alanine--D-alanine ligase family. It depends on Mg(2+) as a cofactor. Requires Mn(2+) as cofactor.

Its subcellular location is the cytoplasm. It catalyses the reaction 2 D-alanine + ATP = D-alanyl-D-alanine + ADP + phosphate + H(+). It functions in the pathway cell wall biogenesis; peptidoglycan biosynthesis. Its function is as follows. Cell wall formation. In Desulfotalea psychrophila (strain LSv54 / DSM 12343), this protein is D-alanine--D-alanine ligase.